A 420-amino-acid polypeptide reads, in one-letter code: MDTPSAALHRHTVGQLRKLLLHREGSAGCGRLQPALDGSQPLDSPLSTVPSSRSQVRVQQELWKQDPTYFQKAALSALACMKILRHAFDGGDMEVLGMLLGYVQDEMIVVVDSYRLPVEGTETRVNAQMESYEYTVQYLETAVPEGLAIVGWYHSHPGYGCWLSGIDAETQTLNQNFQDPYLAIVVDPKRSKASGVIDIGAFRTMPETADTRSVSSHSNASRYGHHSARYYELEVSYFEVPQERRWCDSRLSVEPPKPADATERAMLAQLLEAAKACKNVKRLQTVDRALVPESIGPYALREQADQDLQFRRPLRSFSSNSIARRSSTEVALGNANEELDPLPTLADANLRNHDSPSADMAMDNTSISSNEEQPHLTFQESSGVQLNAAETEYFDIKNELLTLKLLEYQKARFYRDAFTL.

The MPN domain occupies 73 to 208 (AALSALACMK…IGAFRTMPET (136 aa)). Zn(2+) is bound by residues His154, His156, and Asp167. The short motif at 154–167 (HSHPGYGCWLSGID) is the JAMM motif element.

Belongs to the peptidase M67A family. CSN5 subfamily. In terms of assembly, component of the COP9 signalosome (CSN) complex.

The protein localises to the cytoplasm. The protein resides in the nucleus. Catalytic component of the COP9 signalosome (CSN) complex that acts as an regulator of the ubiquitin (Ubl) conjugation pathway by mediating the deneddylation of the cullin subunit of SCF-type E3 ubiquitin-protein ligase complexes. The CSN complex is involved in the regulation of the mating pheromone response. This is COP9 signalosome complex subunit 5 (RRI1) from Eremothecium gossypii (strain ATCC 10895 / CBS 109.51 / FGSC 9923 / NRRL Y-1056) (Yeast).